The primary structure comprises 143 residues: MTADRQWVKIIARWLARIDGISGMLRLAMLGLTGVSTMSFTLKDYGLERLVWPLIGAMCVGTLLFAYYYTEGGVWNQVHRDKRDMSQNYATPFQKISNEMTARGLYAGEKGSELSQEERQAIQKEIDMAYMELRDGIEVEKDD.

The next 2 helical transmembrane spans lie at 20 to 42 (GISG…SFTL) and 52 to 74 (WPLI…EGGV).

The protein resides in the host membrane. The chain is Putative transmembrane protein ORF32 from Haloarcula hispanica (His1V).